A 740-amino-acid polypeptide reads, in one-letter code: Ion-translocating oxidoreductase complex subunit C (740 aa).

4Fe-4S ferredoxin-type domains are found at residues 369 to 397 (GEPQ…QQLY) and 407 to 436 (KATT…VQYF). 8 residues coordinate [4Fe-4S] cluster: C377, C380, C383, C387, C416, C419, C422, and C426. The tract at residues 602 to 716 (KLEQQQANAE…EPEEQVDPRK (115 aa)) is disordered.

Belongs to the 4Fe4S bacterial-type ferredoxin family. RnfC subfamily. In terms of assembly, the complex is composed of six subunits: RsxA, RsxB, RsxC, RsxD, RsxE and RsxG. [4Fe-4S] cluster serves as cofactor.

It is found in the cell inner membrane. Its function is as follows. Part of a membrane-bound complex that couples electron transfer with translocation of ions across the membrane. Required to maintain the reduced state of SoxR. In Escherichia coli (strain SE11), this protein is Ion-translocating oxidoreductase complex subunit C.